The sequence spans 90 residues: Small ribosomal subunit protein bS20 (90 aa).

It belongs to the bacterial ribosomal protein bS20 family.

Its function is as follows. Binds directly to 16S ribosomal RNA. This is Small ribosomal subunit protein bS20 from Acidiphilium cryptum (strain JF-5).